The chain runs to 720 residues: MNSIKSHILRSSKRYISASSKRLAEVEVTVDGRKVSIEAGSSIIQAAELAGVTIPRYCYHDKLAIAGNCRMCLVDVERMPKLIASCAMPVQNGMVVHTDSERIKKAREGVTEMLLENHPLDCPVCDQGGECDLQEQSQRYGSDRGRFHEVVGKRAVENKAIGPLVKTSMNRCIHCTRCVRFMNDVAGAPEFGTAGRGNDMQIGTYIERNINSEMSGNIIDLCPVGALTSKPYAFRARPWELKRTETIDVLDAVGSNIRVDTRGIEVMRVLPRLNDDVNEEWISDKTRFACDGLKTQRLTTPLIRNGDKFETATWDEALSTIAAAYSKINPQNGELKAIAGALVDAESLVSLKDLVNKLGSENVTTDVKQSVNAHGFDIRSNYIFNSTIDGIEDADQILLVGTNPRFEAAVLNTRIRKVWLRSNLEISSVGQDFNSTFDVTNLGEDAKALESALQGSVGEKLGQAKKPLIIVGSGVAESKDSEAIYKLVGEFASKHENFNSGEWNGVNLLHREASRVAALDLGFNTLVEDSTKAKFIYLLGADEITNKDIPKDAFVVYQGHHGDLGASFADVILPGSAYTEKSGTYVNTEGRVQATRAATNPPGVAREDWKIIRALSEYLNAKLPYDDIYSVRLRLGEIAPHLVRHDVIEPVSQEIAKIGFNDLVNKNKSATIFEEPLKNPIDNFYFTDVISRSSPTMAKCISTFGAKIEKVKDEKPDINF.

Residues 1 to 23 constitute a mitochondrion transit peptide; the sequence is MNSIKSHILRSSKRYISASSKRL. The 79-residue stretch at 24 to 102 folds into the 2Fe-2S ferredoxin-type domain; it reads AEVEVTVDGR…GMVVHTDSER (79 aa). Positions 58, 69, 72, and 86 each coordinate [2Fe-2S] cluster. The 4Fe-4S His(Cys)3-ligated-type domain maps to 102–141; it reads RIKKAREGVTEMLLENHPLDCPVCDQGGECDLQEQSQRYG. In terms of domain architecture, 4Fe-4S Mo/W bis-MGD-type spans 241 to 297; that stretch reads LKRTETIDVLDAVGSNIRVDTRGIEVMRVLPRLNDDVNEEWISDKTRFACDGLKTQR.

This sequence belongs to the complex I 75 kDa subunit family. Core subunit of respiratory chain NADH dehydrogenase (Complex I) which is composed of 45 different subunits. This is the largest subunit of complex I and it is a component of the iron-sulfur (IP) fragment of the enzyme. [2Fe-2S] cluster serves as cofactor. Requires [4Fe-4S] cluster as cofactor.

It localises to the mitochondrion. The enzyme catalyses a ubiquinone + NADH + 5 H(+)(in) = a ubiquinol + NAD(+) + 4 H(+)(out). In terms of biological role, core subunit of the mitochondrial membrane respiratory chain NADH dehydrogenase (Complex I) which catalyzes electron transfer from NADH through the respiratory chain, using ubiquinone as an electron acceptor. Essential for catalysing the entry and efficient transfer of electrons within complex I. Plays a key role in the assembly and stability of complex I and participates in the association of complex I with ubiquinol-cytochrome reductase complex (Complex III) to form supercomplexes. Plays a role in cell wall integrity and is involved in osmotic and oxidative resistance, yeast to hypha transition, and the ability to damage and invade oral epithelial cells. The chain is NADH-ubiquinone oxidoreductase 78 kDa subunit, mitochondrial from Candida albicans (strain SC5314 / ATCC MYA-2876) (Yeast).